The chain runs to 95 residues: Mitochondrial import inner membrane translocase subunit Tim13 (95 aa).

Positions 46-69 (CFKKCIGKPGSTLDNSEQKCIAMC) match the Twin CX3C motif motif. 2 disulfide bridges follow: cysteine 46-cysteine 69 and cysteine 50-cysteine 65.

This sequence belongs to the small Tim family. In terms of assembly, heterohexamer; composed of 3 copies of TIMM8 (TIMM8A or TIMM8B) and 3 copies of TIMM13, named soluble 70 kDa complex. Associates with the TIM22 complex, whose core is composed of TIMM22.

Its subcellular location is the mitochondrion inner membrane. Functionally, mitochondrial intermembrane chaperone that participates in the import and insertion of some multi-pass transmembrane proteins into the mitochondrial inner membrane. Also required for the transfer of beta-barrel precursors from the TOM complex to the sorting and assembly machinery (SAM complex) of the outer membrane. Acts as a chaperone-like protein that protects the hydrophobic precursors from aggregation and guide them through the mitochondrial intermembrane space. The TIMM8-TIMM13 complex mediates the import of some proteins while the predominant TIMM9-TIMM10 70 kDa complex mediates the import of much more proteins. This is Mitochondrial import inner membrane translocase subunit Tim13 (timm13) from Danio rerio (Zebrafish).